The chain runs to 1856 residues: Autophagy-related protein 2 (1856 aa).

Disordered stretches follow at residues 123 to 167 (NTND…TGNK), 229 to 283 (LRTL…GNES), 309 to 328 (KSAA…DKED), 395 to 428 (TKSR…DASH), 1157 to 1177 (LNGT…SSLM), 1614 to 1647 (MLGG…VEVA), and 1719 to 1741 (KLQP…EDED). Positions 137–147 (ASEDDDEDDID) are enriched in acidic residues. A compositionally biased stretch (polar residues) spans 250-262 (KKQQGSDNDSPTD). The segment covering 270 to 280 (NDNDDDDDDYG) has biased composition (acidic residues). Residues 412-424 (DNDEIPEDQSESD) are compositionally biased toward acidic residues. Low complexity predominate over residues 1157–1170 (LNGTENGSTSESSS). The segment covering 1621 to 1639 (SVRSPNLGGSDNRRNSNAS) has biased composition (polar residues). A compositionally biased stretch (acidic residues) spans 1732–1741 (TEEEEDEDED).

It belongs to the ATG2 family.

It localises to the preautophagosomal structure membrane. The protein resides in the endoplasmic reticulum membrane. It catalyses the reaction a 1,2-diacyl-sn-glycero-3-phosphocholine(in) = a 1,2-diacyl-sn-glycero-3-phosphocholine(out). It carries out the reaction a 1,2-diacyl-sn-glycero-3-phospho-L-serine(in) = a 1,2-diacyl-sn-glycero-3-phospho-L-serine(out). The enzyme catalyses a 1,2-diacyl-sn-glycero-3-phosphoethanolamine(in) = a 1,2-diacyl-sn-glycero-3-phosphoethanolamine(out). In terms of biological role, lipid transfer protein required for autophagosome completion and peroxisome degradation. Tethers the edge of the isolation membrane (IM) to the endoplasmic reticulum (ER) and mediates direct lipid transfer from ER to IM for IM expansion. ATG2/SPO72 binds to the ER exit site (ERES), which is the membrane source for autophagosome formation, using basic residues in its N-terminal region (NR) and to the expanding edge of the IM through its C-terminal region. The latter binding is assisted by an ATG18-PtdIns3P interaction. ATG2/SPO72 then extracts phospholipids from the membrane source using its NR and transfers them to ATG9 to the IM through its predicted beta-sheet-rich structure for membrane expansion. This is Autophagy-related protein 2 (SPO72) from Candida albicans (strain SC5314 / ATCC MYA-2876) (Yeast).